A 308-amino-acid chain; its full sequence is Glutaminase (308 aa).

Serine 66, asparagine 117, glutamate 161, asparagine 168, tyrosine 192, tyrosine 244, and valine 262 together coordinate substrate.

It belongs to the glutaminase family. As to quaternary structure, homotetramer.

It carries out the reaction L-glutamine + H2O = L-glutamate + NH4(+). The sequence is that of Glutaminase from Salmonella heidelberg (strain SL476).